The primary structure comprises 491 residues: Cytochrome P450 2F2 (491 aa).

C436 contributes to the heme binding site.

The protein belongs to the cytochrome P450 family. The cofactor is heme. In terms of tissue distribution, club cells in lung and liver.

Its subcellular location is the endoplasmic reticulum membrane. The protein resides in the microsome membrane. Functionally, involved in the regio- and stereoselective transformation of naphthalene to trans-1R-hydroxy-2R-glutathionyl-1,2-dihydronaphthalene in the presence of glutathione and glutathione S-transferases. It specifically catalyzes the production of a very reactive and potentially toxic intermediate, the 2R,2S arene oxide, that is associated with necrosis of the unciliated bronchiolar epithelial cells or club cells in lung. This chain is Cytochrome P450 2F2 (Cyp2f2), found in Mus musculus (Mouse).